We begin with the raw amino-acid sequence, 121 residues long: Large ribosomal subunit protein bL20 (121 aa).

It belongs to the bacterial ribosomal protein bL20 family.

Its function is as follows. Binds directly to 23S ribosomal RNA and is necessary for the in vitro assembly process of the 50S ribosomal subunit. It is not involved in the protein synthesizing functions of that subunit. This chain is Large ribosomal subunit protein bL20, found in Polynucleobacter necessarius subsp. necessarius (strain STIR1).